The following is a 224-amino-acid chain: DNA mismatch repair protein MutH (224 aa).

This sequence belongs to the MutH family.

The protein localises to the cytoplasm. Sequence-specific endonuclease that cleaves unmethylated GATC sequences. It is involved in DNA mismatch repair. The sequence is that of DNA mismatch repair protein MutH from Shewanella amazonensis (strain ATCC BAA-1098 / SB2B).